The following is a 469-amino-acid chain: Zinc transporter SLC39A7 (469 aa).

A helical membrane pass occupies residues 10–30 (WVAVGLLTWATLGLLVAELGG). Composition is skewed to basic and acidic residues over residues 42–56 (FHGH…DFHH) and 66–114 (HTHE…EHSR). The disordered stretch occupies residues 42–121 (FHGHSHRHSH…HSRGGYGESG (80 aa)). Position 66 is a pros-methylhistidine (His66). A run of 3 helical transmembrane segments spans residues 138-158 (ALGA…LIPV), 169-189 (LQIL…LHLI), and 214-234 (GPIL…LVVE). Residues 242–263 (GGHGHSHGHGHAHSHTHGSHGH) show a composition bias toward basic residues. Residues 242–310 (GGHGHSHGHG…VRPQNAEEEK (69 aa)) are disordered. Residues 264 to 285 (GRQECSTKEKQSSEEEEKETRG) show a composition bias toward basic and acidic residues. 2 positions are modified to phosphoserine: Ser275 and Ser276. A run of 3 helical transmembrane segments spans residues 386 to 406 (LTAV…GGAV), 410 to 430 (IAGG…FIYV), and 448 to 468 (SLLE…IAHL).

The protein belongs to the ZIP transporter (TC 2.A.5) family. KE4/Catsup subfamily. Homodimer. In terms of processing, methylation at some His residue by METTL9 leads to reduced zinc-binding. Post-translationally, rapidly phosphorylated by CK2 following Zn(2+) treatment. This phosphorylation is required for efficient cytosolic Zn(2+) release.

Its subcellular location is the endoplasmic reticulum membrane. It localises to the golgi apparatus. It is found in the cis-Golgi network membrane. The enzyme catalyses Zn(2+)(in) = Zn(2+)(out). Its function is as follows. Transports Zn(2+) from the endoplasmic reticulum (ER)/Golgi apparatus to the cytosol, playing an essential role in the regulation of cytosolic zinc levels. Acts as a gatekeeper of zinc release from intracellular stores, requiring post-translational activation by phosphorylation, resulting in activation of multiple downstream pathways leading to cell growth and proliferation. Has an essential role in B cell development and is required for proper B cell receptor signaling. Plays an important role in maintaining intestinal epithelial homeostasis and skin dermis development by regulating ER function. Controls cell signaling pathways involved in glucose metabolism in skeletal muscle. Has a protective role against ER stress in different biological contexts. Mediates Zn(2+)-induced ferroptosis. In Pongo abelii (Sumatran orangutan), this protein is Zinc transporter SLC39A7.